Consider the following 277-residue polypeptide: 3-methyl-2-oxobutanoate hydroxymethyltransferase (277 aa).

Positions 49 and 88 each coordinate Mg(2+). Residues 49–50 (DS), aspartate 88, and lysine 118 each bind 3-methyl-2-oxobutanoate. A Mg(2+)-binding site is contributed by glutamate 120. Glutamate 186 acts as the Proton acceptor in catalysis.

Belongs to the PanB family. In terms of assembly, homodecamer; pentamer of dimers. Mg(2+) is required as a cofactor.

Its subcellular location is the cytoplasm. The enzyme catalyses 3-methyl-2-oxobutanoate + (6R)-5,10-methylene-5,6,7,8-tetrahydrofolate + H2O = 2-dehydropantoate + (6S)-5,6,7,8-tetrahydrofolate. It participates in cofactor biosynthesis; (R)-pantothenate biosynthesis; (R)-pantoate from 3-methyl-2-oxobutanoate: step 1/2. In terms of biological role, catalyzes the reversible reaction in which hydroxymethyl group from 5,10-methylenetetrahydrofolate is transferred onto alpha-ketoisovalerate to form ketopantoate. This Cereibacter sphaeroides (strain ATCC 17029 / ATH 2.4.9) (Rhodobacter sphaeroides) protein is 3-methyl-2-oxobutanoate hydroxymethyltransferase.